Here is a 259-residue protein sequence, read N- to C-terminus: UPF0246 protein NMCC_0856 (259 aa).

This sequence belongs to the UPF0246 family.

The sequence is that of UPF0246 protein NMCC_0856 from Neisseria meningitidis serogroup C (strain 053442).